Consider the following 466-residue polypeptide: Ribulose bisphosphate carboxylase large chain (466 aa).

At lysine 5 the chain carries N6,N6,N6-trimethyllysine. The substrate site is built by asparagine 114 and threonine 164. Residue lysine 166 is the Proton acceptor of the active site. Lysine 168 serves as a coordination point for substrate. Mg(2+) contacts are provided by lysine 192, aspartate 194, and glutamate 195. The residue at position 192 (lysine 192) is an N6-carboxylysine. Histidine 285 functions as the Proton acceptor in the catalytic mechanism. Substrate contacts are provided by arginine 286, histidine 318, and serine 370.

The protein belongs to the RuBisCO large chain family. Type I subfamily. As to quaternary structure, heterohexadecamer of 8 large chains and 8 small chains. It depends on Mg(2+) as a cofactor.

It localises to the plastid. Its subcellular location is the chloroplast. The catalysed reaction is 2 (2R)-3-phosphoglycerate + 2 H(+) = D-ribulose 1,5-bisphosphate + CO2 + H2O. It carries out the reaction D-ribulose 1,5-bisphosphate + O2 = 2-phosphoglycolate + (2R)-3-phosphoglycerate + 2 H(+). In terms of biological role, ruBisCO catalyzes two reactions: the carboxylation of D-ribulose 1,5-bisphosphate, the primary event in carbon dioxide fixation, as well as the oxidative fragmentation of the pentose substrate in the photorespiration process. Both reactions occur simultaneously and in competition at the same active site. In Cornus kousa (Kousa dogwood), this protein is Ribulose bisphosphate carboxylase large chain.